A 2620-amino-acid chain; its full sequence is Ubiquitin carboxyl-terminal hydrolase 24 (2620 aa).

In terms of domain architecture, UBA spans 3-44 (SEEEQHMTTLLCMGFSDPATIRKALRLAKNDINEAVALLTNE). The segment at 45 to 102 (RPGLDYGGYEPMDSGGGPSPGPGGGPRGDGGGDGGGGGPSRGGSTGGGGGFDPPPAYH) is disordered. A compositionally biased stretch (gly residues) spans 58-95 (SGGGPSPGPGGGPRGDGGGDGGGGGPSRGGSTGGGGGF). Ser-63 and Ser-88 each carry phosphoserine. Tyr-942 bears the Phosphotyrosine mark. 2 disordered regions span residues 1034-1054 (TSGS…SSSS) and 1129-1151 (TLLS…QQHQ). Over residues 1131–1151 (LSESSSQSSKSPSLSSKQQHQ) the composition is skewed to low complexity. Phosphoserine is present on residues Ser-1141 and Ser-1285. The region spanning 1689–2042 (VGLRNGGATC…NAYMLFYQRV (354 aa)) is the USP domain. The Nucleophile role is filled by Cys-1698. Residues 1921–1945 (ARQDSSSEVGENGRSVDQGGGGSPR) are disordered. The residue at position 1943 (Ser-1943) is a Phosphoserine. Residue His-1970 is the Proton acceptor of the active site. Phosphoserine is present on residues Ser-2047, Ser-2077, and Ser-2561. Positions 2063 to 2090 (AEDLSLSAPSSPEISPQSSPRPHRPNND) are disordered. A compositionally biased stretch (low complexity) spans 2069-2082 (SAPSSPEISPQSSP). Position 2565 is a phosphothreonine (Thr-2565). The segment at 2575–2620 (EKEQSGSSNGSESSPANENGDRHLQQGSESPMMIGELRSDLDDVDP) is disordered. Positions 2579–2592 (SGSSNGSESSPANE) are enriched in low complexity. Ser-2604 is subject to Phosphoserine. Positions 2611–2620 (LRSDLDDVDP) are enriched in basic and acidic residues.

The protein belongs to the peptidase C19 family. In terms of assembly, (Microbial infection) Interacts with human cytomegalovirus protein UL38.

It carries out the reaction Thiol-dependent hydrolysis of ester, thioester, amide, peptide and isopeptide bonds formed by the C-terminal Gly of ubiquitin (a 76-residue protein attached to proteins as an intracellular targeting signal).. Functionally, ubiquitin-specific protease that regulates cell survival in various contexts through modulating the protein stability of some of its substrates including DDB2, MCL1 or TP53. Plays a positive role on ferritinophagy where ferritin is degraded in lysosomes and releases free iron. This is Ubiquitin carboxyl-terminal hydrolase 24 (USP24) from Homo sapiens (Human).